The sequence spans 471 residues: Putative multidrug resistance protein MdtD (471 aa).

The Periplasmic portion of the chain corresponds to 1–11 (MTDLPDSTRWQ). Residues 12–32 (LWIVAFGFFMQSLDTTIVNTA) form a helical membrane-spanning segment. Residues 33–48 (LPSMAQSLGESPLHMH) lie on the Cytoplasmic side of the membrane. A helical membrane pass occupies residues 49–69 (MVIVSYVLTVAVMLPASGWLA). The Periplasmic portion of the chain corresponds to 70–76 (DKVGVRN). The helical transmembrane segment at 77-97 (IFFTAIVLFTLGSLFCALSGT) threads the bilayer. Topologically, residues 98–101 (LNEL) are cytoplasmic. The helical transmembrane segment at 102-124 (LLARALQGVGGAMMVPVGRLTVM) threads the bilayer. Topologically, residues 125–137 (KIVPREQYMAAMT) are periplasmic. Residues 138-158 (FVTLPGQVGPLLGPALGGLLV) traverse the membrane as a helical segment. Residues 159 to 164 (EYASWH) lie on the Cytoplasmic side of the membrane. A helical membrane pass occupies residues 165–185 (WIFLINIPVGIIGAIATLMLM). Topologically, residues 186–196 (PNYTMQTRRFD) are periplasmic. Residues 197-217 (LSGFLLLAVGMAVLTLALDGS) traverse the membrane as a helical segment. At 218–224 (KGTGLSP) the chain is on the cytoplasmic side. A helical transmembrane segment spans residues 225 to 245 (LTIAGLVAVGVVALVLYLLHA). The Periplasmic portion of the chain corresponds to 246–262 (RNNNRALFSLKLFRTRT). A helical transmembrane segment spans residues 263-283 (FSLGLAGSFAGRIGSGMLPFM). The Cytoplasmic segment spans residues 284-285 (TP). Residues 286–306 (VFLQIGLGFSPFHAGLMMIPM) traverse the membrane as a helical segment. At 307 to 341 (VLGSMGMKRIVVQVVNCFGYRRVLVATTLGLSLVT) the chain is on the periplasmic side. The chain crosses the membrane as a helical span at residues 342–362 (LLFMTTALLGWYYVLPFVLFL). Residues 363–395 (QGMVNSTRFSSMNTLTLKDLPDNLASSGNSLLS) lie on the Cytoplasmic side of the membrane. The chain crosses the membrane as a helical span at residues 396–416 (MIMQLSMSIGVTIAGLLLGLF). Residues 417 to 430 (GSQHVSVDSGTTQT) lie on the Periplasmic side of the membrane. A helical membrane pass occupies residues 431–451 (VFMYTWLSMALIIALPAFIFA). At 452 to 471 (RVPNDTHQNVAISRRKRSAQ) the chain is on the cytoplasmic side.

This sequence belongs to the major facilitator superfamily. TCR/Tet family.

The protein localises to the cell inner membrane. This is Putative multidrug resistance protein MdtD from Escherichia coli O139:H28 (strain E24377A / ETEC).